Consider the following 165-residue polypeptide: CDP-archaeol synthase (165 aa).

A run of 3 helical transmembrane segments spans residues 4–24 (IVQLFLLIWPPYVANGSAVLA), 78–98 (LLDAFLLATAAIVGDLLGAFV), and 118–138 (FLLMALLVYSLYRELHIPLLL).

It belongs to the CDP-archaeol synthase family. The cofactor is Mg(2+).

It is found in the cell membrane. The catalysed reaction is 2,3-bis-O-(geranylgeranyl)-sn-glycerol 1-phosphate + CTP + H(+) = CDP-2,3-bis-O-(geranylgeranyl)-sn-glycerol + diphosphate. It functions in the pathway membrane lipid metabolism; glycerophospholipid metabolism. Functionally, catalyzes the formation of CDP-2,3-bis-(O-geranylgeranyl)-sn-glycerol (CDP-archaeol) from 2,3-bis-(O-geranylgeranyl)-sn-glycerol 1-phosphate (DGGGP) and CTP. This reaction is the third ether-bond-formation step in the biosynthesis of archaeal membrane lipids. This Pyrobaculum calidifontis (strain DSM 21063 / JCM 11548 / VA1) protein is CDP-archaeol synthase.